The chain runs to 1203 residues: DNA-directed RNA polymerase subunit beta (1203 aa).

Residues 1174 to 1195 show a composition bias toward basic and acidic residues; that stretch reads AAQEAKAAFEAEEAEKATKAEA. Residues 1174-1203 form a disordered region; sequence AAQEAKAAFEAEEAEKATKAEATEEAAEQE.

This sequence belongs to the RNA polymerase beta chain family. As to quaternary structure, the RNAP catalytic core consists of 2 alpha, 1 beta, 1 beta' and 1 omega subunit. When a sigma factor is associated with the core the holoenzyme is formed, which can initiate transcription.

It catalyses the reaction RNA(n) + a ribonucleoside 5'-triphosphate = RNA(n+1) + diphosphate. In terms of biological role, DNA-dependent RNA polymerase catalyzes the transcription of DNA into RNA using the four ribonucleoside triphosphates as substrates. This chain is DNA-directed RNA polymerase subunit beta, found in Streptococcus pneumoniae (strain P1031).